The chain runs to 96 residues: Antitoxin ParD4 (96 aa).

Belongs to the ParD antitoxin family.

Functionally, antitoxin component of a type II toxin-antitoxin (TA) system. Neutralizes the effect of cognate toxin ParE4, but no other RelE or ParE toxin. This is Antitoxin ParD4 (parD4) from Caulobacter vibrioides (strain ATCC 19089 / CIP 103742 / CB 15) (Caulobacter crescentus).